We begin with the raw amino-acid sequence, 211 residues long: SOSS complex subunit B2 (211 aa).

The OB DNA-binding region spans 27–97; the sequence is IVLEIGRVTK…TLYTGRGGDL (71 aa). Residues 125-211 are disordered; that stretch reads NQQNKTSKEQ…GRDPRRASKR (87 aa). The span at 136-157 shows a compositional bias: polar residues; it reads GNSPPNQNAGNGTVPVFSNNNA. Over residues 179–195 the composition is skewed to pro residues; that stretch reads NGPPPVTAGGTPAPPKP.

It belongs to the SOSS-B family. SOSS-B2 subfamily. In terms of assembly, component of the SOSS complex, composed of soss-b (soss-b1/nabp2 or soss-b2/nabp1), soss-a/ints3 and soss-c/inip. SOSS complexes containing soss-b1/nabp2 are more abundant than complexes containing soss-b2/nabp1.

The protein resides in the nucleus. In terms of biological role, component of the SOSS complex, a multiprotein complex that functions downstream of the MRN complex to promote DNA repair and G2/M checkpoint. In the SOSS complex, acts as a sensor of single-stranded DNA that binds to single-stranded DNA. The SOSS complex associates with DNA lesions and influences diverse endpoints in the cellular DNA damage response including cell-cycle checkpoint activation, recombinational repair and maintenance of genomic stability. Required for efficient homologous recombination-dependent repair of double-strand breaks (DSBs). In Danio rerio (Zebrafish), this protein is SOSS complex subunit B2 (nabp1).